The chain runs to 402 residues: Multidrug resistance protein MdtH (402 aa).

Residues 1 to 12 lie on the Cytoplasmic side of the membrane; it reads MSRVSQARNLGK. A helical transmembrane segment spans residues 13–33; the sequence is YFLLIDNMLVVLGFFVVFPLI. The Periplasmic segment spans residues 34-98; that stretch reads SIRFVDQMGW…GFATMGIAHE (65 aa). The chain crosses the membrane as a helical span at residues 99–116; sequence PWLLWFSCLLSGLGGTLF. At 117-138 the chain is on the cytoplasmic side; that stretch reads DPPRSALVVKLIRPQQRGRFFS. Residues 139 to 159 form a helical membrane-spanning segment; the sequence is LLMMQDSAGAVIGALLGSWLL. The Periplasmic segment spans residues 160–164; that stretch reads QYDFR. The chain crosses the membrane as a helical span at residues 165–185; the sequence is LVCATGAVLFVLCAAFNAWLL. Over 186 to 213 the chain is Cytoplasmic; the sequence is PAWKLSTVRTPVREGMTRVMRDKRFVTY. A helical membrane pass occupies residues 214–234; that stretch reads VLTLAGYYMLAVQVMLMLPIM. The Periplasmic segment spans residues 235–243; it reads VNDVAGAPS. The chain crosses the membrane as a helical span at residues 244 to 264; that stretch reads AVKWMYAIEACLSLTLLYPIA. The Cytoplasmic segment spans residues 265-276; it reads RWSEKHFRLEHR. The chain crosses the membrane as a helical span at residues 277-297; that stretch reads LMAGLLIMSLSMMPVGMVSGL. At 298–299 the chain is on the periplasmic side; sequence QQ. Residues 300–320 form a helical membrane-spanning segment; it reads LFNLICLFYIGSIIAEPARET. Topologically, residues 321-339 are cytoplasmic; the sequence is LSASLADARARGSYMGFSR. Residues 340 to 360 form a helical membrane-spanning segment; sequence LGLAIGGAIGYIGGGWLFDLG. Over 361–367 the chain is Periplasmic; that stretch reads KSAHQPE. Residues 368 to 388 form a helical membrane-spanning segment; it reads LPWMMLGIIGIFTFLALGWQF. Over 389 to 402 the chain is Cytoplasmic; sequence SQKRAARRLLERDA.

It belongs to the major facilitator superfamily. DHA1 family. MdtH (TC 2.A.1.2.21) subfamily.

The protein localises to the cell inner membrane. Functionally, confers resistance to norfloxacin and enoxacin. The chain is Multidrug resistance protein MdtH from Escherichia coli O9:H4 (strain HS).